The primary structure comprises 521 residues: 2-isopropylmalate synthase (521 aa).

The region spanning 12 to 274 (VIIFDTTLRD…WNKIDTTMLT (263 aa)) is the Pyruvate carboxyltransferase domain. 4 residues coordinate Mn(2+): aspartate 21, histidine 209, histidine 211, and asparagine 245. Residues 398–521 (KLVSLTVIAG…DMAAPAAAAS (124 aa)) are regulatory domain.

This sequence belongs to the alpha-IPM synthase/homocitrate synthase family. LeuA type 1 subfamily. Homodimer. The cofactor is Mn(2+).

Its subcellular location is the cytoplasm. It carries out the reaction 3-methyl-2-oxobutanoate + acetyl-CoA + H2O = (2S)-2-isopropylmalate + CoA + H(+). It functions in the pathway amino-acid biosynthesis; L-leucine biosynthesis; L-leucine from 3-methyl-2-oxobutanoate: step 1/4. Its function is as follows. Catalyzes the condensation of the acetyl group of acetyl-CoA with 3-methyl-2-oxobutanoate (2-ketoisovalerate) to form 3-carboxy-3-hydroxy-4-methylpentanoate (2-isopropylmalate). The chain is 2-isopropylmalate synthase from Rhodopseudomonas palustris (strain BisA53).